The primary structure comprises 622 residues: Polypeptide N-acetylgalactosaminyltransferase 6 (622 aa).

Over 1 to 8 (MRLLRRRH) the chain is Cytoplasmic. The helical; Signal-anchor for type II membrane protein transmembrane segment at 9-28 (MPLRLAMVGCAFVLFLFLLH) threads the bilayer. Topologically, residues 29–622 (RDVSSREEAT…SDPHQLWLFV (594 aa)) are lumenal. The N-linked (GlcNAc...) asparagine glycan is linked to asparagine 86. 2 disulfides stabilise this stretch: cysteine 165–cysteine 402 and cysteine 393–cysteine 474. The catalytic subdomain A stretch occupies residues 176–285 (LATTSVIIVF…HGWLEPLLAR (110 aa)). Residues aspartate 269, histidine 271, and histidine 407 each coordinate Mn(2+). The segment at 348–410 (PIKSPTFAGG…PCSVVGHVFR (63 aa)) is catalytic subdomain B. Residue asparagine 476 is glycosylated (N-linked (GlcNAc...) asparagine). One can recognise a Ricin B-type lectin domain in the interval 506–622 (TNQCLDVGEN…SDPHQLWLFV (117 aa)). Cysteine 509 and cysteine 527 are disulfide-bonded. The UDP-N-acetyl-alpha-D-galactosamine site is built by aspartate 511, glutamate 514, histidine 528, and asparagine 533. 2 cysteine pairs are disulfide-bonded: cysteine 553–cysteine 566 and cysteine 597–cysteine 610.

This sequence belongs to the glycosyltransferase 2 family. GalNAc-T subfamily. It depends on Mn(2+) as a cofactor. As to expression, expressed in placenta and trachea. Weakly expressed in brain and pancreas. Expressed in fibroblast. Weakly or not expressed in lung, liver, muscle, kidney, spleen, thymus, prostate, testis, ovary, intestine, colon, leukocyte, stomach, thyroid, spinal cord, lymph node, trachea, adrenal gland and bone marrow.

The protein resides in the golgi apparatus membrane. It catalyses the reaction L-seryl-[protein] + UDP-N-acetyl-alpha-D-galactosamine = a 3-O-[N-acetyl-alpha-D-galactosaminyl]-L-seryl-[protein] + UDP + H(+). It carries out the reaction L-threonyl-[protein] + UDP-N-acetyl-alpha-D-galactosamine = a 3-O-[N-acetyl-alpha-D-galactosaminyl]-L-threonyl-[protein] + UDP + H(+). The protein operates within protein modification; protein glycosylation. Its function is as follows. Catalyzes the initial reaction in O-linked oligosaccharide biosynthesis, the transfer of an N-acetyl-D-galactosamine residue to a serine or threonine residue on the protein receptor. May participate in synthesis of oncofetal fibronectin. Has activity toward MUC1A, MUC2, EA2 and fibronectin peptides. Glycosylates FGF23. The sequence is that of Polypeptide N-acetylgalactosaminyltransferase 6 (GALNT6) from Homo sapiens (Human).